A 384-amino-acid chain; its full sequence is MSSYLFTSESVSEGHPDKIADQISDAVLDEILKQDPKARVACETYVKTGMALVGGEITTSAWVDIENLTRKVICDIGYEHSEMGFDGHSCAVLNAIGKQSADINQGVDRENPLDQGAGDQGIMFGYATNETDVLMPAAITYAHRLMEKQAEVRKSGKLAWLRPDAKSQVTLKYEDNKIVGVDAVVLSTQHSEEVSQKDLHEGVMEEIIKPVLPTEWLSKETKFFINPTGRFVIGGPMGDCGLTGRKIIVDTYGGAARHGGGAFSGKDPSKVDRSAAYAARYVAKNIVAAGLADRCEIQLSYAIGVADPTSIMVETFGTGKVANELLVSLVREFFDLRPYGLIKMLDLIQPIYRETAAYGHFGREQFPWEKVDRAEDLRIAAGLK.

Histidine 15 provides a ligand contact to ATP. Aspartate 17 provides a ligand contact to Mg(2+). Glutamate 43 serves as a coordination point for K(+). Glutamate 56 and glutamine 99 together coordinate L-methionine. Positions 99-109 are flexible loop; that stretch reads QSADINQGVDR. ATP-binding positions include 164-166, 230-231, aspartate 239, 245-246, alanine 262, and lysine 266; these read DAK, RF, and RK. An L-methionine-binding site is contributed by aspartate 239. Lysine 270 serves as a coordination point for L-methionine.

This sequence belongs to the AdoMet synthase family. Homotetramer; dimer of dimers. The cofactor is Mg(2+). K(+) serves as cofactor.

The protein resides in the cytoplasm. It catalyses the reaction L-methionine + ATP + H2O = S-adenosyl-L-methionine + phosphate + diphosphate. Its pathway is amino-acid biosynthesis; S-adenosyl-L-methionine biosynthesis; S-adenosyl-L-methionine from L-methionine: step 1/1. Functionally, catalyzes the formation of S-adenosylmethionine (AdoMet) from methionine and ATP. The overall synthetic reaction is composed of two sequential steps, AdoMet formation and the subsequent tripolyphosphate hydrolysis which occurs prior to release of AdoMet from the enzyme. The polypeptide is S-adenosylmethionine synthase (Haemophilus influenzae (strain 86-028NP)).